A 1230-amino-acid polypeptide reads, in one-letter code: Serine/threonine-protein kinase PDK1 (1230 aa).

Residues 1 to 277 (MASSHFGPAS…ASSGALKKHS (277 aa)) are disordered. A compositionally biased stretch (low complexity) spans 34–50 (SSSSSSRSTTTCSSTSS). Residues 62 to 76 (ETSTAATSRSQLPSN) are compositionally biased toward polar residues. Residues 77–87 (RHSENEAEHDT) are compositionally biased toward basic and acidic residues. Composition is skewed to polar residues over residues 107 to 117 (PRSNRLGTSPQ) and 140 to 175 (SKRQ…SSTI). Basic and acidic residues predominate over residues 185-202 (PNDRLSHDRESHSAERPR). Positions 217-226 (STPSSPTNSY) are enriched in polar residues. Residues 252 to 262 (ARDGDDRERRQ) show a composition bias toward basic and acidic residues. Residues 281 to 801 (WVLGEELGVG…ITFIKTHPFF (521 aa)) enclose the Protein kinase domain. Residues 291–293 (SYS) and lysine 319 each bind ATP. Disordered stretches follow at residues 345–522 (LSDP…RSGA) and 534–597 (TLPP…KMSA). Polar residues-rich tracts occupy residues 378–397 (TASI…TVSN) and 408–433 (IVTT…SPTA). Composition is skewed to basic and acidic residues over residues 466 to 494 (GGED…DNMT) and 502 to 521 (VREE…ERSG). A compositionally biased stretch (pro residues) spans 535–544 (LPPPQIPSTP). Positions 555 to 569 (DGHRTSRETPRDRPH) are enriched in basic and acidic residues. ATP-binding positions include 621-623 (SLA) and glutamate 627. The active-site Proton acceptor is aspartate 666. ATP is bound by residues glutamate 670 and aspartate 684. Residues 850 to 859 (EDEDGFEYDA) are compositionally biased toward acidic residues. 4 disordered regions span residues 850-871 (EDED…GGAV), 907-955 (LGED…GGNR), 972-1035 (GGGM…SDEA), and 1116-1152 (EADG…GGGH). Residues 927–942 (GKREKEVEKKKGEKAR) are compositionally biased toward basic and acidic residues. Composition is skewed to low complexity over residues 977-992 (GSAT…RTPG), 1002-1030 (RPGS…GASM), and 1120-1137 (DPAG…SHVE). Over residues 1138–1152 (SGGGGVGGGGRGGGH) the composition is skewed to gly residues.

Belongs to the protein kinase superfamily. AGC Ser/Thr protein kinase family. PDPK1 subfamily.

The enzyme catalyses L-seryl-[protein] + ATP = O-phospho-L-seryl-[protein] + ADP + H(+). The catalysed reaction is L-threonyl-[protein] + ATP = O-phospho-L-threonyl-[protein] + ADP + H(+). Its function is as follows. Serine/threonine-protein kinase that functions in the sphingolipid-mediated signaling pathway, regulating organization of the plasma membrane. May phosphorylate PKC1 to activate the cell integrity MAPK cascade during cell wall and membrane stress. May regulate sphingolipid metabolism upstream of YPK1. The sequence is that of Serine/threonine-protein kinase PDK1 from Cryptococcus neoformans var. grubii serotype A (strain H99 / ATCC 208821 / CBS 10515 / FGSC 9487) (Filobasidiella neoformans var. grubii).